The sequence spans 454 residues: Cell division cycle-associated 7-like protein (454 aa).

The short motif at 9–33 is the Integrase domain-binding motif 1 (IBM1) element; it reads IPKEVADIFNAPSDDEEFVGFRDDV. Serine 21 is modified (phosphoserine). The short motif at 65–91 is the Integrase domain-binding motif 2 (IBM2) element; it reads FTEELRRIFIEDTDSETEDFAGFTQSD. A Phosphothreonine modification is found at threonine 77. A Phosphoserine modification is found at serine 79. Phosphothreonine occurs at positions 81 and 88. 2 disordered regions span residues 103–169 and 188–213; these read VESD…LFSS and QVIQ…SSDA. 8 positions are modified to phosphoserine: serine 105, serine 108, serine 117, serine 138, serine 139, serine 162, serine 195, and serine 197. The span at 117 to 126 shows a compositional bias: acidic residues; that stretch reads SEEEEDEEED. The MYC-binding stretch occupies residues 213–235; that stretch reads ALLKRTMNIKENKAMLAQLLAEL. Residues lysine 222 and lysine 225 each participate in a glycyl lysine isopeptide (Lys-Gly) (interchain with G-Cter in SUMO2) cross-link. At serine 261 the chain carries Phosphoserine.

Interacts with MYC. Interacts (via IBM motifs) with PSIP1 (via IBD domain); phosphorylation increases its affinity for PSIP1. Post-translationally, phosphorylation increases its interaction with PSIP1. As to expression, ubiquitous. Overexpressed in medulloblastoma.

Its subcellular location is the cytoplasm. The protein localises to the nucleus. Its function is as follows. Plays a role in transcriptional regulation as a repressor that inhibits monoamine oxidase A (MAOA) activity and gene expression by binding to the promoter. Plays an important oncogenic role in mediating the full transforming effect of MYC in medulloblastoma cells. Involved in apoptotic signaling pathways; May act downstream of P38-kinase and BCL-2, but upstream of CASP3/caspase-3 as well as CCND1/cyclin D1 and E2F1. The polypeptide is Cell division cycle-associated 7-like protein (CDCA7L) (Homo sapiens (Human)).